Reading from the N-terminus, the 318-residue chain is Ferrochelatase (318 aa).

Positions 186 and 264 each coordinate Fe cation.

The protein belongs to the ferrochelatase family.

Its subcellular location is the cytoplasm. The enzyme catalyses heme b + 2 H(+) = protoporphyrin IX + Fe(2+). It functions in the pathway porphyrin-containing compound metabolism; protoheme biosynthesis; protoheme from protoporphyrin-IX: step 1/1. In terms of biological role, catalyzes the ferrous insertion into protoporphyrin IX. The sequence is that of Ferrochelatase from Chlamydia caviae (strain ATCC VR-813 / DSM 19441 / 03DC25 / GPIC) (Chlamydophila caviae).